The following is a 631-amino-acid chain: Pescadillo homolog (631 aa).

Residues Arg321–Leu414 form the BRCT domain. Positions Ser428 to His442 are enriched in basic and acidic residues. Disordered regions lie at residues Ser428–Gln471, Tyr489–His561, and Ala602–Lys631. 2 positions are modified to phosphoserine: Ser453 and Ser457. Acidic residues-rich tracts occupy residues Ser453–Gln471 and Val498–Asp525. Residues Glu526–Met538 are compositionally biased toward basic and acidic residues. Residues Lys544–Val553 show a composition bias toward basic residues. Positions Trp591 to Lys631 form a coiled coil. Over residues Ala602–Ala619 the composition is skewed to basic and acidic residues. Low complexity predominate over residues Ala620 to Lys631.

It belongs to the pescadillo family.

It localises to the nucleus. The protein localises to the nucleolus. Its subcellular location is the nucleoplasm. Its function is as follows. Required for maturation of ribosomal RNAs and formation of the large ribosomal subunit. In Drosophila pseudoobscura pseudoobscura (Fruit fly), this protein is Pescadillo homolog.